Here is a 217-residue protein sequence, read N- to C-terminus: Lipid A acyltransferase PagP (217 aa).

The signal sequence occupies residues 1-24; the sequence is MYLKRILITLSLITLPIVPCLSYA. Catalysis depends on residues histidine 89, aspartate 132, and serine 133.

Belongs to the lipid A palmitoyltransferase family. In terms of assembly, homodimer.

Its subcellular location is the cell outer membrane. The catalysed reaction is a lipid A + a 1,2-diacyl-sn-glycero-3-phosphocholine = a hepta-acyl lipid A + a 2-acyl-sn-glycero-3-phosphocholine. It catalyses the reaction a lipid IVA + a 1,2-diacyl-sn-glycero-3-phosphocholine = a lipid IVB + a 2-acyl-sn-glycero-3-phosphocholine. The enzyme catalyses a lipid IIA + a 1,2-diacyl-sn-glycero-3-phosphocholine = a lipid IIB + a 2-acyl-sn-glycero-3-phosphocholine. Its function is as follows. Transfers a fatty acid residue from the sn-1 position of a phospholipid to the N-linked hydroxyfatty acid chain on the proximal unit of lipid A or its precursors. The sequence is that of Lipid A acyltransferase PagP from Pectobacterium atrosepticum (strain SCRI 1043 / ATCC BAA-672) (Erwinia carotovora subsp. atroseptica).